Here is a 253-residue protein sequence, read N- to C-terminus: Imidazole glycerol phosphate synthase subunit HisF (253 aa).

Catalysis depends on residues Asp11 and Asp130.

Belongs to the HisA/HisF family. In terms of assembly, heterodimer of HisH and HisF.

It is found in the cytoplasm. The enzyme catalyses 5-[(5-phospho-1-deoxy-D-ribulos-1-ylimino)methylamino]-1-(5-phospho-beta-D-ribosyl)imidazole-4-carboxamide + L-glutamine = D-erythro-1-(imidazol-4-yl)glycerol 3-phosphate + 5-amino-1-(5-phospho-beta-D-ribosyl)imidazole-4-carboxamide + L-glutamate + H(+). The protein operates within amino-acid biosynthesis; L-histidine biosynthesis; L-histidine from 5-phospho-alpha-D-ribose 1-diphosphate: step 5/9. Its function is as follows. IGPS catalyzes the conversion of PRFAR and glutamine to IGP, AICAR and glutamate. The HisF subunit catalyzes the cyclization activity that produces IGP and AICAR from PRFAR using the ammonia provided by the HisH subunit. The chain is Imidazole glycerol phosphate synthase subunit HisF from Gluconobacter oxydans (strain 621H) (Gluconobacter suboxydans).